A 369-amino-acid chain; its full sequence is Mitogen-activated protein kinase 4 (369 aa).

A Protein kinase domain is found at 32 to 319 (YVPIKPIGRG…VTEALEHPYM (288 aa)). Residues 38 to 46 (IGRGAYGIV) and Lys-61 contribute to the ATP site. The active-site Proton acceptor is Asp-158. Thr-191 carries the post-translational modification Phosphothreonine. The TXY signature appears at 191–193 (TEY). Residue Tyr-193 is modified to Phosphotyrosine.

The protein belongs to the protein kinase superfamily. CMGC Ser/Thr protein kinase family. MAP kinase subfamily. Dually phosphorylated on Thr-191 and Tyr-193, which activates the enzyme. In terms of tissue distribution, expressed in leaves and panicles.

The catalysed reaction is L-seryl-[protein] + ATP = O-phospho-L-seryl-[protein] + ADP + H(+). The enzyme catalyses L-threonyl-[protein] + ATP = O-phospho-L-threonyl-[protein] + ADP + H(+). Activated by threonine and tyrosine phosphorylation. In Oryza sativa subsp. japonica (Rice), this protein is Mitogen-activated protein kinase 4 (MPK4).